The primary structure comprises 417 residues: Phosphoglycerate kinase 2 (417 aa).

The residue at position 2 (Ser2) is an N-acetylserine. A phosphoserine mark is found at Ser2 and Ser4. Position 11 is an N6-acetyllysine (Lys11). Val23, Asp24, Phe25, Asn26, Gln38, and Arg39 together coordinate (2R)-3-phosphoglycerate. Lys48 carries the N6-acetyllysine modification. 4 residues coordinate (2R)-3-phosphoglycerate: Ser62, His63, Gly65, and Arg66. An N6-acetyllysine mark is found at Lys75, Lys86, and Lys97. Residues Leu122 and Arg123 each coordinate (2R)-3-phosphoglycerate. N6-acetyllysine occurs at positions 131 and 146. Residues His170 and Arg171 each coordinate (2R)-3-phosphoglycerate. Tyr196 is subject to Phosphotyrosine. Lys199 is modified (N6-acetyllysine). Gly214 is a binding site for ADP. Position 214 (Gly214) interacts with CDP. 2 residues coordinate AMP: Ala215 and Lys216. Ala215 is a binding site for ATP. Ala215 provides a ligand contact to Mg(2+). Residues Ala218 and Asp219 each coordinate Mg(2+). Asp219 lines the CDP pocket. Lys220 is an AMP binding site. An ATP-binding site is contributed by Lys220. Gly238 contacts ADP. Position 238 (Gly238) interacts with CDP. Gly239 serves as a coordination point for AMP. ATP is bound at residue Gly239. N6-acetyllysine occurs at positions 267 and 291. Gly313 provides a ligand contact to AMP. An ATP-binding site is contributed by Gly313. Gly338, Val340, and Phe343 together coordinate CDP. An ADP-binding site is contributed by Phe343. Glu344 contacts AMP. The ATP site is built by Glu344, Asp375, and Thr376. A Mg(2+)-binding site is contributed by Asp375.

The protein belongs to the phosphoglycerate kinase family. As to quaternary structure, monomer. Mg(2+) serves as cofactor.

The protein localises to the cytoplasm. It catalyses the reaction (2R)-3-phosphoglycerate + ATP = (2R)-3-phospho-glyceroyl phosphate + ADP. Its pathway is carbohydrate degradation; glycolysis; pyruvate from D-glyceraldehyde 3-phosphate: step 2/5. Its function is as follows. Essential for sperm motility and male fertility but is not required for the completion of spermatogenesis. This chain is Phosphoglycerate kinase 2 (PGK2), found in Equus caballus (Horse).